The primary structure comprises 26 residues: CKGKGQSCSKLMYDCCTGSCSRRGKC.

Intrachain disulfides connect Cys-1–Cys-16, Cys-8–Cys-20, and Cys-15–Cys-26. The residue at position 26 (Cys-26) is a Cysteine amide.

Belongs to the conotoxin O1 superfamily. Expressed by the venom duct.

Its subcellular location is the secreted. In terms of biological role, omega-conotoxins act at presynaptic membranes, they bind and block voltage-gated calcium channels (Cav). This toxin blocks N-, P- and Q-type calcium channels. This chain is Omega-conotoxin CVIC, found in Conus catus (Cat cone).